The sequence spans 176 residues: Large ribosomal subunit protein uL6 (176 aa).

This sequence belongs to the universal ribosomal protein uL6 family. In terms of assembly, part of the 50S ribosomal subunit.

In terms of biological role, this protein binds to the 23S rRNA, and is important in its secondary structure. It is located near the subunit interface in the base of the L7/L12 stalk, and near the tRNA binding site of the peptidyltransferase center. This is Large ribosomal subunit protein uL6 from Paraburkholderia phymatum (strain DSM 17167 / CIP 108236 / LMG 21445 / STM815) (Burkholderia phymatum).